The following is a 337-amino-acid chain: Phenylpyruvate C(3)-methyltransferase (337 aa).

This sequence belongs to the methyltransferase superfamily.

It catalyses the reaction 3-phenylpyruvate + S-adenosyl-L-methionine = (3S)-2-oxo-3-phenylbutanoate + S-adenosyl-L-homocysteine + H(+). It functions in the pathway antibiotic biosynthesis. S-adenosyl-L-methionine-dependent methyltransferase involved in synthesis of the nonproteinogenic amino acid (2S,3S)-beta-methyl-phenylalanine, a building block of the antibiotic mannopeptimycin. The polypeptide is Phenylpyruvate C(3)-methyltransferase (mppJ) (Streptomyces hygroscopicus).